The chain runs to 234 residues: MLHENSPSFTVQGETSRCDQIIQKGDHALIGISPFNSRFSKDYVVDLIQWSSHYFRQVDILLPCEREASRLLVASGIDNVKAIKKTHREIRRHLRNLDYVISTATLKSKQIRVIQFSDFSLNHDYQSLKTQVENAFNESESFKKSCLDMSFQAIKGRLKGTGQYFGQIDLQLVYKALPYIFAEIPFYLNTPRLLGVKYSTLLYHRPWSIGKGLFNGSYPIQVADKQSYGIVTQL.

The active-site Nucleophile is the Ser33. Residues Asn36, 179–183, Tyr203, and 208–209 contribute to the substrate site; these read YIFAE and SI.

The protein belongs to the CDPS family.

It catalyses the reaction 2 L-leucyl-tRNA(Leu) = cyclo(L-leucyl-L-leucyl) + 2 tRNA(Leu) + 2 H(+). Functionally, it uses activated amino acids in the form of aminoacyl-tRNAs (aa-tRNAs) as substrates to catalyze the ATP-independent formation of cyclodipeptides which are intermediates in diketopiperazine (DKP) biosynthetic pathways. Catalyzes the formation of cyclo(L-Leu-L-Leu) (cLL) from L-leucyl-tRNA(Leu). Can incorporate various nonpolar residues, such as L-phenylalanine, L-leucine and L-methionine, into cyclodipeptides. The polypeptide is Cyclo(L-leucyl-L-leucyl) synthase (Photorhabdus laumondii subsp. laumondii (strain DSM 15139 / CIP 105565 / TT01) (Photorhabdus luminescens subsp. laumondii)).